Reading from the N-terminus, the 304-residue chain is MHIRILGSAAGGGFPQWNCNCRNCRGVRAGTLRAQPRTQSSIALSDDGGEWVLCNASPDIRAQLEAFPALQPARQLRDTAIAGIVLLDSQIDHCTGLLTLREGCPHQVWCTEMVHQDLTSGFPLFNMLSHWNGGLQHQLIELDAKPFTIPACPGLSITAIALRSSAPPYSPHRGNPHPGDNIGLFIEDRRSGRSLFYAPGLGQVEEHLLSWMRRADCLLVDGTLWRDDEMQLCEVGDKLGSEMGHLCQSGPGGMIEVLDGLPSVRKILIHINNTNPILDLDSPERAELDARGIEVAFDGMSIHL.

The protein belongs to the PqqB family.

It participates in cofactor biosynthesis; pyrroloquinoline quinone biosynthesis. May be involved in the transport of PQQ or its precursor to the periplasm. This Stutzerimonas stutzeri (Pseudomonas stutzeri) protein is Coenzyme PQQ synthesis protein B.